We begin with the raw amino-acid sequence, 316 residues long: Taste receptor type 2 member 3 (316 aa).

Over 1–6 the chain is Extracellular; sequence MMGLTE. A helical membrane pass occupies residues 7-27; it reads GVFLILSGTQFTLGILVNCFI. Over 28-42 the chain is Cytoplasmic; that stretch reads ELVNGSSWFKTKRMS. A helical transmembrane segment spans residues 43–63; sequence LSDFIITTLALLRIILLCIIL. The Extracellular portion of the chain corresponds to 64–94; it reads TDSFLIEFSPNTHDSGIIMQIIDVSWTFTNH. Residues 95-115 form a helical membrane-spanning segment; sequence LSIWLATCLGVLYCLKIASFS. Topologically, residues 116–128 are cytoplasmic; the sequence is HPTFLWLKWRVSR. A helical membrane pass occupies residues 129 to 149; sequence VMVWMLLGALLLSCGSTASLI. The Extracellular segment spans residues 150–186; sequence NEFKLYSVFRGIEATRNVTEHFRKKRSEYYLIHVLGT. The N-linked (GlcNAc...) asparagine glycan is linked to N166. Residues 187–207 traverse the membrane as a helical segment; that stretch reads LWYLPPLIVSLASYSLLIFSL. Residues 208–234 are Cytoplasmic-facing; sequence GRHTRQMLQNGTSSRDPTTEAHKRAIR. A helical membrane pass occupies residues 235-255; it reads IILSFFFLFLLYFLAFLIASF. The Extracellular portion of the chain corresponds to 256-266; sequence GNFLPKTKMAK. A helical transmembrane segment spans residues 267 to 287; the sequence is MIGEVMTMFYPAGHSFILILG. Over 288-316 the chain is Cytoplasmic; it reads NSKLKQTFVVMLRCESGHLKPGSKGPIFS.

Belongs to the G-protein coupled receptor T2R family. In terms of tissue distribution, expressed in subsets of taste receptor cells of the tongue and palate epithelium and exclusively in gustducin-positive cells. Expressed in the antrum and fundus (part of the stomach), duodenum and in gastric endocrine cells.

The protein localises to the membrane. In terms of biological role, gustducin-coupled receptor implicated in the perception of bitter compounds in the oral cavity and the gastrointestinal tract. Signals through PLCB2 and the calcium-regulated cation channel TRPM5. This chain is Taste receptor type 2 member 3 (TAS2R3), found in Homo sapiens (Human).